We begin with the raw amino-acid sequence, 237 residues long: CDP-diacylglycerol--serine O-phosphatidyltransferase (237 aa).

Transmembrane regions (helical) follow at residues 3–23 (INPLYLFPNLFTASSIFLGMM), 25–45 (IFYASSYQFVMACWLVVASLI), 73–93 (VVAFGVAPSLITYFYVGYNFG), 95–115 (IGMAVSALFVIFGAIRLARFN), 124–144 (YSFIGIPIPAAAVLVVLCVLL), 150–170 (FLEGNTEKLFLGFIVLLGVLM), 184–204 (WNLKLFILVLIFLSLVFVRPL), and 207–227 (LSVFMGLYLIYGIIRWIFLMV).

Belongs to the CDP-alcohol phosphatidyltransferase class-I family.

The protein resides in the cell membrane. It catalyses the reaction a CDP-1,2-diacyl-sn-glycerol + L-serine = a 1,2-diacyl-sn-glycero-3-phospho-L-serine + CMP + H(+). The sequence is that of CDP-diacylglycerol--serine O-phosphatidyltransferase (pssA) from Helicobacter pylori (strain J99 / ATCC 700824) (Campylobacter pylori J99).